The chain runs to 510 residues: Chromosomal replication initiator protein DnaA (510 aa).

Positions 1 to 107 (MTNDPGSGFA…VRIAPPPADD (107 aa)) are domain I, interacts with DnaA modulators. The tract at residues 107 to 169 (DDDDSVAAAV…ADTSASADGT (63 aa)) is domain II. A disordered region spans residues 119–168 (PGLEASPETSQEVSDEIDDFGENAPKSRQSWPTHFKKRSTDADTSASADG). Positions 170-386 (SLNRRYTFDT…GALIRVTAFA (217 aa)) are domain III, AAA+ region. Residues Gly-214, Gly-216, Lys-217, and Thr-218 each contribute to the ATP site. The segment at 387–510 (SLNKTPIDKA…TTRIRQRSKR (124 aa)) is domain IV, binds dsDNA.

It belongs to the DnaA family. As to quaternary structure, oligomerizes as a right-handed, spiral filament on DNA at oriC.

The protein localises to the cytoplasm. Its function is as follows. Plays an essential role in the initiation and regulation of chromosomal replication. ATP-DnaA binds to the origin of replication (oriC) to initiate formation of the DNA replication initiation complex once per cell cycle. Binds the DnaA box (a 9 base pair repeat at the origin) and separates the double-stranded (ds)DNA. Forms a right-handed helical filament on oriC DNA; dsDNA binds to the exterior of the filament while single-stranded (ss)DNA is stabiized in the filament's interior. The ATP-DnaA-oriC complex binds and stabilizes one strand of the AT-rich DNA unwinding element (DUE), permitting loading of DNA polymerase. After initiation quickly degrades to an ADP-DnaA complex that is not apt for DNA replication. Binds acidic phospholipids. The chain is Chromosomal replication initiator protein DnaA from Mycobacterium ulcerans (strain Agy99).